Here is a 152-residue protein sequence, read N- to C-terminus: MIYSKVENFINENKQNAIFTEGASHENIGRIEENLQCDLPNSYKWFLEKYGAGGLFGVLVLGYNFDHASVVNRTNEYKEHYGLTDGLVVIEDVDYFAYCLDTNKMKDGECPVVEWDRVIGYQDTVADSFIEFFYNKIQEAKDDWDEDEDWDD.

In terms of assembly, interacts with cognate toxin YobL but not with non-cognate putative toxin YeeF. The interaction inhibits the toxic activity of YobL.

It localises to the cytoplasm. Immunity component of one of 6 LXG toxin-immunity modules in this strain. They promote kin selection, mediate competition in biofilms, and drive spatial segregation of different strains, indicating that LXG toxins may help avoid warfare between strains in biofilms. Mediates intercellular competition during biofilm formation; disruption of the operon disadvantages the bacteria, but overexpression of the cognate immunity protein restores growth in competition with wild-type. In situ neutralizes the toxic effect of cognate toxin YobL. Neutralizes the toxic activity of cognate toxin YobL upon expression in E.coli. Does not have immunity protein activity on other LXG toxins. In Bacillus subtilis (strain 168), this protein is Immunity protein YobK (yobK).